Reading from the N-terminus, the 158-residue chain is Cyclic pyranopterin monophosphate synthase (158 aa).

Residues 74-76 (MCH) and 112-113 (ME) contribute to the substrate site. The active site involves aspartate 127.

The protein belongs to the MoaC family. As to quaternary structure, homohexamer; trimer of dimers.

It carries out the reaction (8S)-3',8-cyclo-7,8-dihydroguanosine 5'-triphosphate = cyclic pyranopterin phosphate + diphosphate. Its pathway is cofactor biosynthesis; molybdopterin biosynthesis. Catalyzes the conversion of (8S)-3',8-cyclo-7,8-dihydroguanosine 5'-triphosphate to cyclic pyranopterin monophosphate (cPMP). The polypeptide is Cyclic pyranopterin monophosphate synthase (Helicobacter pylori (strain ATCC 700392 / 26695) (Campylobacter pylori)).